Reading from the N-terminus, the 114-residue chain is Small ribosomal subunit protein uS14m (114 aa).

This sequence belongs to the universal ribosomal protein uS14 family.

The protein localises to the mitochondrion. In Eremothecium gossypii (strain ATCC 10895 / CBS 109.51 / FGSC 9923 / NRRL Y-1056) (Yeast), this protein is Small ribosomal subunit protein uS14m (MRP2).